The sequence spans 379 residues: Homoserine O-acetyltransferase (379 aa).

The region spanning 52–356 is the AB hydrolase-1 domain; sequence NVVMVLHALT…IRGHDGFLVE (305 aa). The active-site Nucleophile is the Ser157. Arg227 lines the substrate pocket. Residues Asp320 and His350 contribute to the active site. Asp351 is a substrate binding site.

This sequence belongs to the AB hydrolase superfamily. MetX family. In terms of assembly, homodimer.

Its subcellular location is the cytoplasm. The catalysed reaction is L-homoserine + acetyl-CoA = O-acetyl-L-homoserine + CoA. It participates in amino-acid biosynthesis; L-methionine biosynthesis via de novo pathway; O-acetyl-L-homoserine from L-homoserine: step 1/1. Transfers an acetyl group from acetyl-CoA to L-homoserine, forming acetyl-L-homoserine. The chain is Homoserine O-acetyltransferase from Mycobacterium ulcerans (strain Agy99).